A 211-amino-acid polypeptide reads, in one-letter code: Endo-1,4-beta-xylanase 3 (211 aa).

The N-terminal stretch at M1–R27 is a signal peptide. The 183-residue stretch at S28–S210 folds into the GH11 domain. E106 acts as the Nucleophile in catalysis. An intrachain disulfide couples C119 to C138. The active-site Proton donor is the E197.

Belongs to the glycosyl hydrolase 11 (cellulase G) family.

It is found in the secreted. It catalyses the reaction Endohydrolysis of (1-&gt;4)-beta-D-xylosidic linkages in xylans.. The protein operates within glycan degradation; xylan degradation. The polypeptide is Endo-1,4-beta-xylanase 3 (xynC) (Aspergillus kawachii (strain NBRC 4308) (White koji mold)).